Consider the following 294-residue polypeptide: Pyridoxal 5'-phosphate synthase subunit PdxS (294 aa).

Asp24 lines the D-ribose 5-phosphate pocket. The active-site Schiff-base intermediate with D-ribose 5-phosphate is the Lys81. Gly153 contacts D-ribose 5-phosphate. Residue Arg165 participates in D-glyceraldehyde 3-phosphate binding. D-ribose 5-phosphate-binding positions include Gly214 and 235-236; that span reads GS.

It belongs to the PdxS/SNZ family. In terms of assembly, in the presence of PdxT, forms a dodecamer of heterodimers.

The enzyme catalyses aldehydo-D-ribose 5-phosphate + D-glyceraldehyde 3-phosphate + L-glutamine = pyridoxal 5'-phosphate + L-glutamate + phosphate + 3 H2O + H(+). Its pathway is cofactor biosynthesis; pyridoxal 5'-phosphate biosynthesis. Its function is as follows. Catalyzes the formation of pyridoxal 5'-phosphate from ribose 5-phosphate (RBP), glyceraldehyde 3-phosphate (G3P) and ammonia. The ammonia is provided by the PdxT subunit. Can also use ribulose 5-phosphate and dihydroxyacetone phosphate as substrates, resulting from enzyme-catalyzed isomerization of RBP and G3P, respectively. The sequence is that of Pyridoxal 5'-phosphate synthase subunit PdxS from Bacillus pumilus (strain SAFR-032).